A 468-amino-acid polypeptide reads, in one-letter code: Argininosuccinate lyase (468 aa).

The protein belongs to the lyase 1 family. Argininosuccinate lyase subfamily.

It is found in the cytoplasm. It catalyses the reaction 2-(N(omega)-L-arginino)succinate = fumarate + L-arginine. The protein operates within amino-acid biosynthesis; L-arginine biosynthesis; L-arginine from L-ornithine and carbamoyl phosphate: step 3/3. The sequence is that of Argininosuccinate lyase from Gloeobacter violaceus (strain ATCC 29082 / PCC 7421).